Here is a 241-residue protein sequence, read N- to C-terminus: Ubiquinone biosynthesis O-methyltransferase (241 aa).

Residues arginine 42, glycine 62, aspartate 83, and methionine 127 each coordinate S-adenosyl-L-methionine.

It belongs to the methyltransferase superfamily. UbiG/COQ3 family.

It catalyses the reaction a 3-demethylubiquinol + S-adenosyl-L-methionine = a ubiquinol + S-adenosyl-L-homocysteine + H(+). The catalysed reaction is a 3-(all-trans-polyprenyl)benzene-1,2-diol + S-adenosyl-L-methionine = a 2-methoxy-6-(all-trans-polyprenyl)phenol + S-adenosyl-L-homocysteine + H(+). The protein operates within cofactor biosynthesis; ubiquinone biosynthesis. Functionally, O-methyltransferase that catalyzes the 2 O-methylation steps in the ubiquinone biosynthetic pathway. The sequence is that of Ubiquinone biosynthesis O-methyltransferase from Pectobacterium atrosepticum (strain SCRI 1043 / ATCC BAA-672) (Erwinia carotovora subsp. atroseptica).